The primary structure comprises 438 residues: 2-(3-amino-3-carboxypropyl)histidine synthase subunit 1 (438 aa).

A disordered region spans residues 7-29 (SGAAEQGGRDGPGRGRAPRGRVA). 3 residues coordinate [4Fe-4S] cluster: Cys110, Cys214, and Cys342. Residues 391–421 (VNHGQDRRPHAPGRPARGKVQEGSARPPSAV) are disordered.

Belongs to the DPH1/DPH2 family. DPH1 subfamily. As to quaternary structure, component of the 2-(3-amino-3-carboxypropyl)histidine synthase complex composed of DPH1, DPH2, DPH3 and a NADH-dependent reductase. Interacts with DPH2. Interacts with RBM8A. [4Fe-4S] cluster serves as cofactor. As to expression, expressed in heart, brain, placenta, lung, liver, skeletal muscle, kidney, pancreas, spleen, thymus, mammary gland, colon, small intestine, testis and ovary. Reduced expression in primary breast and ovarian tumors.

The protein localises to the nucleus. It localises to the cytoplasm. It carries out the reaction L-histidyl-[translation elongation factor 2] + S-adenosyl-L-methionine = 2-[(3S)-amino-3-carboxypropyl]-L-histidyl-[translation elongation factor 2] + S-methyl-5'-thioadenosine + H(+). Its pathway is protein modification; peptidyl-diphthamide biosynthesis. Catalyzes the first step of diphthamide biosynthesis, a post-translational modification of histidine which occurs in elongation factor 2. DPH1 and DPH2 transfer a 3-amino-3-carboxypropyl (ACP) group from S-adenosyl-L-methionine (SAM) to a histidine residue, the reaction is assisted by a reduction system comprising DPH3 and a NADH-dependent reductase. Acts as a tumor suppressor. This Homo sapiens (Human) protein is 2-(3-amino-3-carboxypropyl)histidine synthase subunit 1.